The sequence spans 122 residues: Large ribosomal subunit protein uL14 (122 aa).

This sequence belongs to the universal ribosomal protein uL14 family. In terms of assembly, part of the 50S ribosomal subunit. Forms a cluster with proteins L3 and L19. In the 70S ribosome, L14 and L19 interact and together make contacts with the 16S rRNA in bridges B5 and B8.

Binds to 23S rRNA. Forms part of two intersubunit bridges in the 70S ribosome. The polypeptide is Large ribosomal subunit protein uL14 (Symbiobacterium thermophilum (strain DSM 24528 / JCM 14929 / IAM 14863 / T)).